Here is a 280-residue protein sequence, read N- to C-terminus: F420-dependent methylenetetrahydromethanopterin dehydrogenase (280 aa).

Belongs to the MTD family.

It carries out the reaction 5,10-methylenetetrahydromethanopterin + oxidized coenzyme F420-(gamma-L-Glu)(n) + 2 H(+) = 5,10-methenyl-5,6,7,8-tetrahydromethanopterin + reduced coenzyme F420-(gamma-L-Glu)(n). Its pathway is one-carbon metabolism; methanogenesis from CO(2); 5,10-methylene-5,6,7,8-tetrahydromethanopterin from 5,10-methenyl-5,6,7,8-tetrahydromethanopterin (coenzyme F420 route): step 1/1. Its function is as follows. Catalyzes the reversible reduction of methenyl-H(4)MPT(+) to methylene-H(4)MPT. The sequence is that of F420-dependent methylenetetrahydromethanopterin dehydrogenase from Methanospirillum hungatei JF-1 (strain ATCC 27890 / DSM 864 / NBRC 100397 / JF-1).